We begin with the raw amino-acid sequence, 881 residues long: Lon protease (881 aa).

Positions 1-24 are enriched in basic and acidic residues; it reads MAKNTDIEHDAHEPAGHGDVRESA. Residues 1–77 are disordered; it reads MAKNTDIEHD…RAGEAEKGVP (77 aa). A compositionally biased stretch (polar residues) spans 49–59; it reads QTDTESAQGAA. Residues 65 to 77 show a composition bias toward basic and acidic residues; sequence EVQRAGEAEKGVP. The Lon N-terminal domain maps to 94 to 287; the sequence is VHLIPLTGRP…EVFVYIKKEK (194 aa). 440 to 447 is an ATP binding site; that stretch reads GPPGVGKT. The region spanning 679-861 is the Lon proteolytic domain; sequence ANKVGTAVGL…EEVLSLAFPK (183 aa). Active-site residues include Ser767 and Lys810.

The protein belongs to the peptidase S16 family. As to quaternary structure, homohexamer. Organized in a ring with a central cavity.

Its subcellular location is the cytoplasm. It carries out the reaction Hydrolysis of proteins in presence of ATP.. Functionally, ATP-dependent serine protease that mediates the selective degradation of mutant and abnormal proteins as well as certain short-lived regulatory proteins. Required for cellular homeostasis and for survival from DNA damage and developmental changes induced by stress. Degrades polypeptides processively to yield small peptide fragments that are 5 to 10 amino acids long. Binds to DNA in a double-stranded, site-specific manner. The polypeptide is Lon protease (Treponema pallidum (strain Nichols)).